The sequence spans 55 residues: Large ribosomal subunit protein bL33 (55 aa).

Residues 1–11 show a composition bias toward basic and acidic residues; that stretch reads MAKGARDKIKL. Residues 1 to 24 form a disordered region; that stretch reads MAKGARDKIKLESTAGTGHFYTTT. The segment covering 14-24 has biased composition (polar residues); sequence TAGTGHFYTTT.

This sequence belongs to the bacterial ribosomal protein bL33 family.

The chain is Large ribosomal subunit protein bL33 from Burkholderia multivorans (strain ATCC 17616 / 249).